The sequence spans 275 residues: Multi-heme protein MamP (275 aa).

Residues 1 to 6 (MNSKVA) lie on the Cytoplasmic side of the membrane. Positions 7–20 (LLVVGLAVVLALVI) form a transmembrane segment. Residues 21 to 275 (GRQGPVAPQA…GPCEACHVIK (255 aa)) lie on the Lumenal side of the membrane. The interval 89–206 (KLKVFEGHWQ…GGLGFAQLEG (118 aa)) is PDZ. The MCR (magnetochrome) 1 signature appears at 210 to 230 (ILAGDPRPHGYRGACTDCHPI). Heme-binding residues include C224, C227, H228, C268, C271, and H272. The short motif at 250–274 (ITRDMVARSVNPHEVRGPCEACHVI) is the MCR 2 element.

Belongs to the magnetosome MamP family. As to quaternary structure, homodimer. The cofactor is heme. Subject to proteolytic cleavage which requires both MamE and MamO.

The protein localises to the cell inner membrane. Functionally, involved in redox-control of magnetite formation; oxidizes Fe(2+) to Fe(3+) or to mixed-valent Fe(2+)-Fe(3+) oxide minerals. May control magnetite crystal size and number. Overproduction of MamP leads to more crystals than normal during exponential growth of normal size; in stationary phase crystal numbers become wild-type. The sequence is that of Multi-heme protein MamP (mamP) from Paramagnetospirillum magneticum (strain ATCC 700264 / AMB-1) (Magnetospirillum magneticum).